We begin with the raw amino-acid sequence, 452 residues long: Translation initiation factor eIF2B subunit gamma (452 aa).

Position 1 is an N-acetylmethionine (M1). Residue S260 is modified to Phosphoserine.

The protein belongs to the eIF-2B gamma/epsilon subunits family. In terms of assembly, component of the translation initiation factor 2B (eIF2B) complex which is a heterodecamer of two sets of five different subunits: alpha, beta, gamma, delta and epsilon. Subunits alpha, beta and delta comprise a regulatory subcomplex and subunits epsilon and gamma comprise a catalytic subcomplex. Within the complex, the hexameric regulatory complex resides at the center, with the two heterodimeric catalytic subcomplexes bound on opposite sides.

Its subcellular location is the cytoplasm. The protein localises to the cytosol. Activated by the chemical integrated stress response (ISR) inhibitor ISRIB which stimulates guanine nucleotide exchange factor activity for both phosphorylated and unphosphorylated eIF2. Acts as a component of the translation initiation factor 2B (eIF2B) complex, which catalyzes the exchange of GDP for GTP on the eukaryotic initiation factor 2 (eIF2) complex gamma subunit. Its guanine nucleotide exchange factor activity is repressed when bound to eIF2 complex phosphorylated on the alpha subunit, thereby limiting the amount of methionyl-initiator methionine tRNA available to the ribosome and consequently global translation is repressed. This Homo sapiens (Human) protein is Translation initiation factor eIF2B subunit gamma (EIF2B3).